The primary structure comprises 118 residues: Small ribosomal subunit protein uS13 (118 aa).

Positions 91 to 118 are disordered; the sequence is HRRGLPVRGQRTKTNARTRKGPRKPIKK.

Belongs to the universal ribosomal protein uS13 family. As to quaternary structure, part of the 30S ribosomal subunit. Forms a loose heterodimer with protein S19. Forms two bridges to the 50S subunit in the 70S ribosome.

In terms of biological role, located at the top of the head of the 30S subunit, it contacts several helices of the 16S rRNA. In the 70S ribosome it contacts the 23S rRNA (bridge B1a) and protein L5 of the 50S subunit (bridge B1b), connecting the 2 subunits; these bridges are implicated in subunit movement. Contacts the tRNAs in the A and P-sites. The protein is Small ribosomal subunit protein uS13 of Photorhabdus laumondii subsp. laumondii (strain DSM 15139 / CIP 105565 / TT01) (Photorhabdus luminescens subsp. laumondii).